Consider the following 424-residue polypeptide: Enolase (424 aa).

Position 162 (Q162) interacts with (2R)-2-phosphoglycerate. E204 acts as the Proton donor in catalysis. The Mg(2+) site is built by D241, E284, and D311. (2R)-2-phosphoglycerate-binding residues include K336, R365, S366, and K387. K336 functions as the Proton acceptor in the catalytic mechanism.

Belongs to the enolase family. Mg(2+) serves as cofactor.

The protein resides in the cytoplasm. Its subcellular location is the secreted. It localises to the cell surface. It catalyses the reaction (2R)-2-phosphoglycerate = phosphoenolpyruvate + H2O. It participates in carbohydrate degradation; glycolysis; pyruvate from D-glyceraldehyde 3-phosphate: step 4/5. Catalyzes the reversible conversion of 2-phosphoglycerate (2-PG) into phosphoenolpyruvate (PEP). It is essential for the degradation of carbohydrates via glycolysis. The sequence is that of Enolase from Sinorhizobium fredii (strain NBRC 101917 / NGR234).